Here is a 496-residue protein sequence, read N- to C-terminus: MTPAQSYPHLDVLFITPEIHPLNKTGGLGEVSAALPTALSELGMDVRILIPGYPQILNGLKNKQKIAEFAAQSSFPAATLLSARLPFGASGNVPLFIIDCPELYRRDGGPYTDPQGHNWPDNAIRFGLLSKIGAILASDASPLDWHPDVVHCNDWQSGLVPAYLHFHKGTKAASLMVIHNLAFQGVFSPETVSQLGLPQTSFHTEGVEYYGGMSFLKAGLYYCDHIVTVSPTYAREIQVAPLGFGMEGLLSLRHEHITGIVNGISDEWNPVNDPHLEQNYSMDDLSGKVINKAALQQQLGLTVDPDVPLFGAVSRLTYQKGYDLLLRIITQLIDIPGQLVILGSGETMLEQELMRMARNHPGKMAVRIGFDEKLAHLIEAGADCFLMPSRFEPCGLNQMYSQCYGTPPLVHGTGGLLDTVVDCTAESLADGTATGFVFHELTPEAFLGALERAVAAYRDKPVWDRLMRNGMVQDFSWRASATDYRKIYLSLLNQKR.

Lys-24 serves as a coordination point for ADP-alpha-D-glucose.

It belongs to the glycosyltransferase 1 family. Bacterial/plant glycogen synthase subfamily.

The enzyme catalyses [(1-&gt;4)-alpha-D-glucosyl](n) + ADP-alpha-D-glucose = [(1-&gt;4)-alpha-D-glucosyl](n+1) + ADP + H(+). It functions in the pathway glycan biosynthesis; glycogen biosynthesis. Functionally, synthesizes alpha-1,4-glucan chains using ADP-glucose. The protein is Glycogen synthase of Nitrosospira multiformis (strain ATCC 25196 / NCIMB 11849 / C 71).